The following is a 562-amino-acid chain: Protein wntless (562 aa).

Over 1 to 15 (MSGTILENLSGRKLS) the chain is Cytoplasmic. The helical transmembrane segment at 16–36 (ILVSSLMLCQVVCFLMGGLFA) threads the bilayer. Residues 37 to 239 (PVPAGHQTVL…AIHQNGGFTQ (203 aa)) lie on the Lumenal side of the membrane. N-linked (GlcNAc...) asparagine glycosylation is found at Asn-58 and Asn-103. A helical transmembrane segment spans residues 240–260 (VWLVLKTLLFPFVIGIMMWFW). At 261-275 (RRVHILQRSPALLEY) the chain is on the cytoplasmic side. The chain crosses the membrane as a helical span at residues 276–296 (MLFYLGGALSFLNLPLELLTL). Residues 297–311 (GVEMPYMLLLSDVRQ) lie on the Lumenal side of the membrane. A helical membrane pass occupies residues 312-332 (GIFYAMLLSFWLVFAGEHMLI). Residues 333 to 344 (QDSPSKSTIRSR) are Cytoplasmic-facing. A helical membrane pass occupies residues 345–365 (YWKHLSAVVVGCISLFVFDIC). Over 366–390 (ERGVQMRNPFYSIWTTPLGAKVAMS) the chain is Lumenal. Residues 391 to 411 (FIVLAGVSAAIYFLFLCFMVW) form a helical membrane-spanning segment. Over 412–441 (KVFKDIGDKRTSLPSMSQARRLHYEGLIYR) the chain is Cytoplasmic. The helical transmembrane segment at 442–462 (FKFLMLATLLCAGLTVAGFIM) threads the bilayer. At 463–482 (GQMAEGHWKWNENIEIQLTS) the chain is on the lumenal side. The chain crosses the membrane as a helical span at residues 483–503 (AFLTGVYGMWNIYIFALIILY). The Cytoplasmic segment spans residues 504 to 562 (APSHKQWPTMRHSDETTQSNENIVASAASEEIEFSNLPSDSNPSEISSLTSFTRKVAFD).

Belongs to the wntless family. In terms of assembly, interacts with wg; in the Golgi. Interacts with Vps35, a component of the retromer complex; wls stability is regulated by Vps35.

The protein resides in the presynaptic cell membrane. Its subcellular location is the postsynaptic cell membrane. The protein localises to the cell membrane. It is found in the endoplasmic reticulum membrane. It localises to the endosome membrane. The protein resides in the golgi apparatus membrane. A segment polarity gene required for wingless (wg)-dependent patterning processes, acting in both wg-sending cells and wg-target cells. In non-neuronal cells wls directs wg secretion. The wls traffic loop encompasses the Golgi, the cell surface, an endocytic compartment and a retrograde route leading back to the Golgi, and involves clathrin-mediated endocytosis and the retromer complex (a conserved protein complex consisting of Vps35 and Vps26). In neuronal cells (the larval motorneuron NMJ), the wg signal moves across the synapse via the release of wls-containing exosome-like vesicles. Postsynaptic wls is required for the trafficking of fz2 through the fz2-interacting protein Grip. This chain is Protein wntless, found in Drosophila grimshawi (Hawaiian fruit fly).